The chain runs to 400 residues: Serine/threonine-protein kinase AFC3 (400 aa).

A disordered region spans residues 1 to 29; the sequence is MIANGFESMDKERVRKRPRMTWDEAPAEP. In terms of domain architecture, Protein kinase spans 71–396; it reads YKILSKMGEG…ANEALDHPFF (326 aa). ATP contacts are provided by residues 77–85 and K100; that span reads MGEGTFGRV. Catalysis depends on D196, which acts as the Proton acceptor.

It belongs to the protein kinase superfamily. CMGC Ser/Thr protein kinase family. Lammer subfamily.

It carries out the reaction L-seryl-[protein] + ATP = O-phospho-L-seryl-[protein] + ADP + H(+). The enzyme catalyses L-threonyl-[protein] + ATP = O-phospho-L-threonyl-[protein] + ADP + H(+). It catalyses the reaction L-tyrosyl-[protein] + ATP = O-phospho-L-tyrosyl-[protein] + ADP + H(+). This is Serine/threonine-protein kinase AFC3 (AFC3) from Arabidopsis thaliana (Mouse-ear cress).